Reading from the N-terminus, the 215-residue chain is MOB kinase activator-like 1B (215 aa).

Residues 1–25 are disordered; the sequence is MSLFGLGRNQKTFRPKKSAPSGTKG. Zn(2+) is bound by residues Cys79, Cys84, His161, and His166.

This sequence belongs to the MOB1/phocein family. As to quaternary structure, interacts with SIK1. As to expression, expression is detected along the vasculature in cotyledons, hypocotyls and roots of 3- to 4-day-old seedlings.

The chain is MOB kinase activator-like 1B from Arabidopsis thaliana (Mouse-ear cress).